Reading from the N-terminus, the 509-residue chain is MTVVSGASKASGADLLDYDVVVARFDPVFGLEVHVELSTVTKMFCGCATTFGAEPNTQVCPVCLGLPGSLPVLNRAAVQSAIRIGLALNCEIVPWCRFARKNYFYPDVPKNYQISQYDEPIAINGYLEVPLEDDTTWRVEIERAHMEEDTGKLTHLGSETGRIYGATTSLIDYNRAGVPLIEIVTKPIEGAGVRAPQIARAYVKALQDLLRTLDVSDVRMDQGSMRCDANVSLKPIGTVEFGTRSEIKNVNSLKSVEMAVRYEMQRQGAILVSGGRIAQETRHFHEDGYTSPGRAKETAQDYRYFPDPDLEPVAPSRELVEQLRQTIPELPWLSRKRIQQEWGISDEVMRDLVNAGAVELVAATVKNGASSEQARAWWGNFLVQKANEANITLDELAITPAQVAVVVALVDEGKLSIRLARQVVEGVLAGEGEPEQVMVDRDLALVRDDSVMQAAVDEALAADPDVAEKIRGGKVAAAGAIVGAVMKTTRGQADAARVRELVLAICGQG.

Belongs to the GatB/GatE family. GatB subfamily. In terms of assembly, heterotrimer of A, B and C subunits.

It carries out the reaction L-glutamyl-tRNA(Gln) + L-glutamine + ATP + H2O = L-glutaminyl-tRNA(Gln) + L-glutamate + ADP + phosphate + H(+). The catalysed reaction is L-aspartyl-tRNA(Asn) + L-glutamine + ATP + H2O = L-asparaginyl-tRNA(Asn) + L-glutamate + ADP + phosphate + 2 H(+). Allows the formation of correctly charged Asn-tRNA(Asn) or Gln-tRNA(Gln) through the transamidation of misacylated Asp-tRNA(Asn) or Glu-tRNA(Gln) in organisms which lack either or both of asparaginyl-tRNA or glutaminyl-tRNA synthetases. The reaction takes place in the presence of glutamine and ATP through an activated phospho-Asp-tRNA(Asn) or phospho-Glu-tRNA(Gln). In Mycobacterium leprae (strain Br4923), this protein is Aspartyl/glutamyl-tRNA(Asn/Gln) amidotransferase subunit B.